The following is a 520-amino-acid chain: Non-structural protein PNS7 (520 aa).

This Catharanthus roseus (Madagascar periwinkle) protein is Non-structural protein PNS7 (S6).